We begin with the raw amino-acid sequence, 225 residues long: Putative ankyrin repeat protein RBE_1025 (225 aa).

ANK repeat units follow at residues 6 to 35, 41 to 71, 75 to 120, and 124 to 153; these read LSKD…AINP, NGKT…NVNI, TGFT…DVNI, and KGNT…SPFI.

In Rickettsia bellii (strain RML369-C), this protein is Putative ankyrin repeat protein RBE_1025.